The sequence spans 427 residues: Tol-Pal system protein TolB (427 aa).

The N-terminal stretch at 1–23 (MKLLKRLVSVFAIVLAVGSNAFA) is a signal peptide.

This sequence belongs to the TolB family. In terms of assembly, the Tol-Pal system is composed of five core proteins: the inner membrane proteins TolA, TolQ and TolR, the periplasmic protein TolB and the outer membrane protein Pal. They form a network linking the inner and outer membranes and the peptidoglycan layer.

The protein localises to the periplasm. Part of the Tol-Pal system, which plays a role in outer membrane invagination during cell division and is important for maintaining outer membrane integrity. This chain is Tol-Pal system protein TolB, found in Haemophilus influenzae (strain 86-028NP).